The sequence spans 1300 residues: Kinesin-like protein KIN-4C (1300 aa).

Residues 6–360 (CVRVAVNIRP…LKYANRARNI (355 aa)) enclose the Kinesin motor domain. 85–92 (GQTGSGKT) is an ATP binding site. 3 coiled-coil regions span residues 580–615 (TSVLKQHYEKKVYDLEQEKRALQREIEGLRHNLASI), 653–697 (QLMR…RAWK), and 781–823 (EVTV…AKIS). Composition is skewed to basic and acidic residues over residues 956 to 971 (ADENLKNEHSMKKQET) and 1001 to 1013 (EWKPEHESERESE). 4 disordered regions span residues 956–1018 (ADEN…ESVI), 1097–1132 (NADGKENNSISESEALENGENSQESDEKDKGQQQQV), 1144–1187 (ALAD…RKKW), and 1200–1300 (PALP…TRRV). Polar residues-rich tracts occupy residues 1169 to 1180 (IGNTTGKSNVPR), 1205 to 1222 (THTNTHLIPEANSVTVDS), 1230 to 1239 (NSDSGESNSI), and 1275 to 1288 (GFVQSNSGRASGSR). Basic and acidic residues predominate over residues 1289–1300 (TSDEKENHTRRV).

It belongs to the TRAFAC class myosin-kinesin ATPase superfamily. Kinesin family. KIN-4 subfamily. Homodimer.

Kinesin-like motor protein involved in the control of the oriented deposition of cellulose microfibrils. The polypeptide is Kinesin-like protein KIN-4C (Arabidopsis thaliana (Mouse-ear cress)).